A 377-amino-acid chain; its full sequence is Probable protein phosphatase 2C 61 (377 aa).

In terms of domain architecture, PPM-type phosphatase spans 30 to 338; that stretch reads AAGEFSMAAA…DDITAVVVFL (309 aa). 4 residues coordinate Mn(2+): D64, G65, D269, and D329.

The protein belongs to the PP2C family. Mg(2+) is required as a cofactor. It depends on Mn(2+) as a cofactor.

The enzyme catalyses O-phospho-L-seryl-[protein] + H2O = L-seryl-[protein] + phosphate. It carries out the reaction O-phospho-L-threonyl-[protein] + H2O = L-threonyl-[protein] + phosphate. This Oryza sativa subsp. japonica (Rice) protein is Probable protein phosphatase 2C 61.